Reading from the N-terminus, the 151-residue chain is Protein SprT-like (151 aa).

The SprT-like domain occupies 7-147 (QKLTESISES…GKCKGKLHLH (141 aa)). His-67 lines the Zn(2+) pocket. The active site involves Glu-68. His-71 is a Zn(2+) binding site.

It belongs to the SprT family. Zn(2+) serves as cofactor.

It localises to the cytoplasm. This is Protein SprT-like from Staphylococcus carnosus (strain TM300).